We begin with the raw amino-acid sequence, 200 residues long: Snake venom metalloproteinase BmooMP-I (200 aa).

The Peptidase M12B domain maps to 5 to 200; sequence RYIELAVVAD…HNPQCILNEP (196 aa). The Ca(2+) site is built by Glu-8 and Asp-92. Cystine bridges form between Cys-116/Cys-195, Cys-155/Cys-179, and Cys-157/Cys-162. His-141 provides a ligand contact to Zn(2+). Glu-142 is a catalytic residue. Zn(2+) contacts are provided by His-145 and His-151. Ca(2+) contacts are provided by Cys-195 and Asn-198.

The protein belongs to the venom metalloproteinase (M12B) family. P-I subfamily. As to quaternary structure, monomer. Zn(2+) serves as cofactor. As to expression, expressed by the venom gland.

It localises to the secreted. In terms of biological role, zinc metalloprotease that displays fibrinogenolytic, gelatinase and weak hemorrhagic activities. Degrades the three chain of fibrinogen Aalpha-chain (FGA), Bbeta-chain (FGB), and gamma (FGG). The chain is Snake venom metalloproteinase BmooMP-I from Bothrops moojeni (Lance-headed viper).